The chain runs to 239 residues: Putative transcriptional regulator of 2-aminoethylphosphonate degradation operons (239 aa).

In terms of domain architecture, HTH gntR-type spans 8–76; sequence IPQYLLIKAQ…DRRGWFVTPE (69 aa). Positions 36–55 form a DNA-binding region, H-T-H motif; the sequence is ERELCAIFNTTRITIRESLA.

This is Putative transcriptional regulator of 2-aminoethylphosphonate degradation operons (phnR) from Salmonella paratyphi A (strain ATCC 9150 / SARB42).